The sequence spans 305 residues: MKVYFVFLCLLPSLISGASILPEPRKDVRASASNAEIQSLAEQFYAADTNKAASGDITLNLQYKASSTQTSSGTDFASQKLFNYVNEAKLFARPTFARLVDLLDNYVHTTGTAESVPTAEVNEQNAFIDEIFKTSIITKLSDFFISKGYYSSAASFKTDLKEMWFGLYTRTSGPLDSSGFEHVFHGEIHKGKISGLHNWVRLYLLEKSGQVNYLSYSSDGVWNGYPDIYAFQLKWSTYLKTLGSFFIGSSPEFDIAMYTLCYVTRPDSLCSVKMGGSIFQIQTYTWANSTYGNGKRYVASSYPNI.

The N-terminal stretch at 1–17 (MKVYFVFLCLLPSLISG) is a signal peptide. Residues 33–305 (SNAEIQSLAE…RYVASSYPNI (273 aa)) enclose the EndoU domain. Residues H182, H197, and K240 contribute to the active site. An N-linked (GlcNAc...) asparagine glycan is attached at N288.

The protein belongs to the ENDOU family. In terms of assembly, monomer. It depends on Mn(2+) as a cofactor.

It localises to the secreted. The enzyme catalyses ribonucleotidyl-uridine-RNA = a 5'-end dephospho-uridine-RNA + a 3'-end 2',3'-cyclophospho-ribonucleotide-RNA. Its function is as follows. Endoribonuclease that cleaves single-stranded RNAs at 5' of uridylates and releases a product with a 2',3'-cyclic phosphate at the 3'-end. This Xenopus laevis (African clawed frog) protein is Uridylate-specific endoribonuclease D (endou-d).